Here is a 504-residue protein sequence, read N- to C-terminus: Protein Dok-7 (504 aa).

One can recognise a PH domain in the interval 4–109 (AALVEGQVKL…WDARIRYALG (106 aa)). The 106-residue stretch at 105-210 (RYALGEVHRF…RGISPTKGPF (106 aa)) folds into the IRS-type PTB domain. 3 disordered regions span residues 210 to 229 (FGLR…TVEE), 249 to 351 (SHAG…YSSS), and 411 to 483 (LCLA…PHAG). Low complexity-rich tracts occupy residues 263–279 (LSSS…SASS) and 288–310 (SSSS…AGEA). Residues 331 to 341 (GRQSSSDSGIA) show a composition bias toward polar residues.

Homodimer. Forms a heterotetramer composed of 2 DOK7 and 2 MUSK molecules which facilitates MUSK trans-autophosphorylation on tyrosine residue and activation. Interacts (via IRS-type PTB domain) with MUSK (via cytoplasmic part); requires MUSK phosphorylation. In terms of tissue distribution, preferentially expressed in skeletal muscle and heart. Present in thigh muscle, diaphragm and heart but not in the liver or spleen (at protein level).

The protein localises to the cell membrane. It is found in the synapse. In terms of biological role, probable muscle-intrinsic activator of MUSK that plays an essential role in neuromuscular synaptogenesis. Acts in aneural activation of MUSK and subsequent acetylcholine receptor (AchR) clustering in myotubes. Induces autophosphorylation of MUSK. The protein is Protein Dok-7 (DOK7) of Homo sapiens (Human).